A 328-amino-acid polypeptide reads, in one-letter code: Malate dehydrogenase (328 aa).

Residue 12–18 (GAAGQIA) coordinates NAD(+). The substrate site is built by arginine 93 and arginine 99. NAD(+) is bound by residues asparagine 106, glutamine 113, and 130 to 132 (VGN). Residues asparagine 132 and arginine 163 each coordinate substrate. Histidine 188 acts as the Proton acceptor in catalysis.

This sequence belongs to the LDH/MDH superfamily. MDH type 2 family.

It catalyses the reaction (S)-malate + NAD(+) = oxaloacetate + NADH + H(+). Catalyzes the reversible oxidation of malate to oxaloacetate. In Burkholderia lata (strain ATCC 17760 / DSM 23089 / LMG 22485 / NCIMB 9086 / R18194 / 383), this protein is Malate dehydrogenase.